Reading from the N-terminus, the 149-residue chain is SsrA-binding protein (149 aa).

This sequence belongs to the SmpB family.

Its subcellular location is the cytoplasm. Functionally, required for rescue of stalled ribosomes mediated by trans-translation. Binds to transfer-messenger RNA (tmRNA), required for stable association of tmRNA with ribosomes. tmRNA and SmpB together mimic tRNA shape, replacing the anticodon stem-loop with SmpB. tmRNA is encoded by the ssrA gene; the 2 termini fold to resemble tRNA(Ala) and it encodes a 'tag peptide', a short internal open reading frame. During trans-translation Ala-aminoacylated tmRNA acts like a tRNA, entering the A-site of stalled ribosomes, displacing the stalled mRNA. The ribosome then switches to translate the ORF on the tmRNA; the nascent peptide is terminated with the 'tag peptide' encoded by the tmRNA and targeted for degradation. The ribosome is freed to recommence translation, which seems to be the essential function of trans-translation. The chain is SsrA-binding protein from Wolbachia pipientis subsp. Culex pipiens (strain wPip).